A 150-amino-acid polypeptide reads, in one-letter code: Transcriptional repressor NrdR (150 aa).

A zinc finger lies at 3-34 (CPFCNFEESKVVDSRATDDNTTIRRRRECLNC). The region spanning 49–139 (VLVVKKDLTR…VYRQFKDINT (91 aa)) is the ATP-cone domain.

It belongs to the NrdR family. Zn(2+) serves as cofactor.

Functionally, negatively regulates transcription of bacterial ribonucleotide reductase nrd genes and operons by binding to NrdR-boxes. The polypeptide is Transcriptional repressor NrdR (Clostridium botulinum (strain Alaska E43 / Type E3)).